Consider the following 30-residue polypeptide: Putative alpha-amylase inhibitor (30 aa).

The protein belongs to the leguminous lectin family.

Its function is as follows. Lectin and alpha-amylase inhibitor. Acts as a defensive protein against insects. This is Putative alpha-amylase inhibitor from Phaseolus vulgaris (Kidney bean).